A 284-amino-acid polypeptide reads, in one-letter code: Nucleotide-binding protein VSAL_I0495 (284 aa).

Residue 8-15 (GNSGAGKS) participates in ATP binding. 56–59 (DIRN) is a binding site for GTP.

It belongs to the RapZ-like family.

Functionally, displays ATPase and GTPase activities. The polypeptide is Nucleotide-binding protein VSAL_I0495 (Aliivibrio salmonicida (strain LFI1238) (Vibrio salmonicida (strain LFI1238))).